The sequence spans 602 residues: Elongation factor 4 (602 aa).

The region spanning 7–189 is the tr-type G domain; it reads SRLRNFCIIA…AVVERVPPPK (183 aa). GTP-binding positions include 19 to 24 and 136 to 139; these read DHGKST and NKVD.

This sequence belongs to the TRAFAC class translation factor GTPase superfamily. Classic translation factor GTPase family. LepA subfamily.

The protein resides in the cell inner membrane. It catalyses the reaction GTP + H2O = GDP + phosphate + H(+). Functionally, required for accurate and efficient protein synthesis under certain stress conditions. May act as a fidelity factor of the translation reaction, by catalyzing a one-codon backward translocation of tRNAs on improperly translocated ribosomes. Back-translocation proceeds from a post-translocation (POST) complex to a pre-translocation (PRE) complex, thus giving elongation factor G a second chance to translocate the tRNAs correctly. Binds to ribosomes in a GTP-dependent manner. The protein is Elongation factor 4 of Prochlorococcus marinus (strain MIT 9211).